The primary structure comprises 417 residues: Serine hydroxymethyltransferase (417 aa).

Residues Leu-121 and 125–127 (GHL) each bind (6S)-5,6,7,8-tetrahydrofolate. At Lys-229 the chain carries N6-(pyridoxal phosphate)lysine. 355-357 (SPF) contributes to the (6S)-5,6,7,8-tetrahydrofolate binding site.

Belongs to the SHMT family. Homodimer. The cofactor is pyridoxal 5'-phosphate.

Its subcellular location is the cytoplasm. It catalyses the reaction (6R)-5,10-methylene-5,6,7,8-tetrahydrofolate + glycine + H2O = (6S)-5,6,7,8-tetrahydrofolate + L-serine. It functions in the pathway one-carbon metabolism; tetrahydrofolate interconversion. Its pathway is amino-acid biosynthesis; glycine biosynthesis; glycine from L-serine: step 1/1. Its function is as follows. Catalyzes the reversible interconversion of serine and glycine with tetrahydrofolate (THF) serving as the one-carbon carrier. This reaction serves as the major source of one-carbon groups required for the biosynthesis of purines, thymidylate, methionine, and other important biomolecules. Also exhibits THF-independent aldolase activity toward beta-hydroxyamino acids, producing glycine and aldehydes, via a retro-aldol mechanism. This Edwardsiella ictaluri (strain 93-146) protein is Serine hydroxymethyltransferase.